Here is a 77-residue protein sequence, read N- to C-terminus: UPF0401 protein UTI89_C4989 (77 aa).

The protein belongs to the UPF0401 family.

This chain is UPF0401 protein UTI89_C4989, found in Escherichia coli (strain UTI89 / UPEC).